The primary structure comprises 821 residues: Frameshifted structural polyprotein (821 aa).

The tract at residues 1 to 106 is disordered; that stretch reads MNRGFFNMLG…KPKPGKRQRM (106 aa). Residues 38–49 show a composition bias toward polar residues; it reads LASQIQQLTTAV. Basic residues predominate over residues 67 to 106; the sequence is PPPRQKKQAPKQPPKPKKPKTQEKKKKQPAKPKPGKRQRM. A ribosome-binding region spans residues 93 to 101; sequence KQPAKPKPG. The Peptidase S3 domain maps to 114–264; sequence RLFDVKNEDG…KTTPEGTEEW (151 aa). Residues His-141, Asp-163, and Ser-215 each act as charge relay system in the active site. Residues 265 to 279 form a functions as an uncleaved signal peptide for the precursor of protein E3/E2 region; it reads SAAPLVTAMCLLGNV. N-linked (GlcNAc...) asparagine; by host glycosylation is present at Asn-278. Cys-283 and Cys-289 form a disulfide bridge. Asn-524 and Asn-646 each carry an N-linked (GlcNAc...) asparagine; by host glycan. The helical transmembrane segment at 696-716 threads the bilayer; that stretch reads ILAVASATVAMMIGVTVAVLC. 3 S-palmitoyl cysteine; by host lipidation sites follow: Cys-724, Cys-744, and Cys-745. 2 helical membrane-spanning segments follow: residues 726-746 and 764-784; these read TPYA…LCCV and NSQP…IVLM.

Belongs to the alphavirus frameshifted structural polyprotein family. Homomultimer. Interacts with host karyopherin KPNA4; this interaction allows the nuclear import of the viral capsid protein. Interacts with spike glycoprotein E2. Interacts with host IRAK1; the interaction leads to inhibition of IRAK1-dependent signaling. In terms of assembly, the precursor of protein E3/E2 and E1 form a heterodimer shortly after synthesis. As to quaternary structure, processing of the precursor of protein E3/E2 into E2 and E3 results in a heterodimer of the spike glycoproteins E2 and E1. Spike at virion surface are constituted of three E2-E1 heterodimers. In terms of processing, specific enzymatic cleavages in vivo yield mature proteins. Capsid protein is auto-cleaved during polyprotein translation, unmasking a signal peptide at the N-terminus of the precursor of E3/E2. The remaining polyprotein is then targeted to the host endoplasmic reticulum, where host signal peptidase cleaves it into pE2 and TF. pE2 is further processed to mature E3 and E2 by host furin in trans-Golgi vesicle. Palmitoylated via thioester bonds. These palmitoylations may induce disruption of the C-terminus transmembrane. This would result in the reorientation of E2 C-terminus from lumenal to cytoplasmic side. Post-translationally, palmitoylated via thioester bonds.

The protein localises to the virion. It is found in the host cytoplasm. It localises to the host cell membrane. Its subcellular location is the host nucleus. The protein resides in the virion membrane. The enzyme catalyses Autocatalytic release of the core protein from the N-terminus of the togavirus structural polyprotein by hydrolysis of a -Trp-|-Ser- bond.. Forms an icosahedral capsid with a T=4 symmetry composed of 240 copies of the capsid protein surrounded by a lipid membrane through which penetrate 80 spikes composed of trimers of E1-E2 heterodimers. The capsid protein binds to the viral RNA genome at a site adjacent to a ribosome binding site for viral genome translation following genome release. Possesses a protease activity that results in its autocatalytic cleavage from the nascent structural protein. Following its self-cleavage, the capsid protein transiently associates with ribosomes, and within several minutes the protein binds to viral RNA and rapidly assembles into icosahedric core particles. The resulting nucleocapsid eventually associates with the cytoplasmic domain of the spike glycoprotein E2 at the cell membrane, leading to budding and formation of mature virions. In case of infection, new virions attach to target cells and after clathrin-mediated endocytosis their membrane fuses with the host endosomal membrane. This leads to the release of the nucleocapsid into the cytoplasm, followed by an uncoating event necessary for the genomic RNA to become accessible. The uncoating might be triggered by the interaction of capsid proteins with ribosomes. Binding of ribosomes would release the genomic RNA since the same region is genomic RNA-binding and ribosome-binding. Specifically inhibits interleukin-1 receptor-associated kinase 1/IRAK1-dependent signaling during viral entry, representing a means by which the alphaviruses may evade innate immune detection and activation prior to viral gene expression. Functionally, provides the signal sequence for the translocation of the precursor of protein E3/E2 to the host endoplasmic reticulum. Furin-cleaved E3 remains associated with spike glycoprotein E1 and mediates pH protection of the latter during the transport via the secretory pathway. After virion release from the host cell, the assembly protein E3 is gradually released in the extracellular space. In terms of biological role, plays an essential role in viral attachment to target host cell, by binding to the cell receptor. Synthesized as a pE2 precursor which is processed by furin at the cell membrane just before virion budding, giving rise to E2-E1 heterodimer. The pE2-E1 heterodimer is stable, whereas E2-E1 is unstable and dissociate at low pH. pE2 is processed at the last step, presumably to avoid E1 fusion activation before its final export to cell surface. E2 C-terminus contains a transitory transmembrane that would be disrupted by palmitoylation, resulting in reorientation of the C-terminal tail from lumenal to cytoplasmic side. This step is critical since E2 C-terminus is involved in budding by interacting with capsid proteins. This release of E2 C-terminus in cytoplasm occurs lately in protein export, and precludes premature assembly of particles at the endoplasmic reticulum membrane. Its function is as follows. Plays a role in viral assembly and release. This chain is Frameshifted structural polyprotein, found in Sindbis virus (SINV).